Reading from the N-terminus, the 68-residue chain is Alpha/kappa-conotoxin-like pl14.2 (68 aa).

The signal sequence occupies residues 1-27 (MPSVRSVTCCCLLWMMFSVQLVTPGSP). A propeptide spanning residues 28 to 39 (ATAQLSGQRTAR) is cleaved from the precursor. 2 disulfides stabilise this stretch: cysteine 46–cysteine 61 and cysteine 50–cysteine 63. An Arginine amide modification is found at arginine 64. A propeptide spanning residues 65-68 (GKRD) is cleaved from the precursor.

This sequence belongs to the conotoxin J superfamily. In terms of tissue distribution, expressed by the venom duct.

The protein resides in the secreted. In terms of biological role, highly inhibits both nicotinic acetylcholine receptors (neuronal (alpha-3/beta-4) and muscular (alpha-1/beta-1/epsilon/delta) subtypes) and the voltage-gated potassium channel Kv1.6/KCNA6 subtype. This Conus planorbis (Planorbis cone) protein is Alpha/kappa-conotoxin-like pl14.2.